Reading from the N-terminus, the 145-residue chain is Probable transport accessory protein MmpS2 (145 aa).

A helical membrane pass occupies residues 11–31 (MWLLLAIVVVAVVGGLGIYRL).

Belongs to the MmpS family.

The protein localises to the cell membrane. In Mycobacterium bovis (strain ATCC BAA-935 / AF2122/97), this protein is Probable transport accessory protein MmpS2 (mmpS2).